Here is a 722-residue protein sequence, read N- to C-terminus: MAQTVQNVTLSLTLPITCHICLGKVRQPVVCTNNHVFCSICIDLWLKNNSQCPACRVPITPENPCKEIIGGTSESEPMLSHTVRKHLRKTRLELLHREYEDEIDCLQKEVEELKSKNLSLESQIKTILDPLALMQGSQNEDKHPLADNPSKMDPDSVVEWKKKLRTANEIYEKVKDDVDKLKEANKKLKLENGGLLRENLRLKAEVDNRSPQKFGRFTVAALQSKVEQYERETNRLKKALERSDKYIEELESQVAHLKHSEEAKEDVDALCQRAPSADSKGPNGSDELGPPKNQSDSARKQAGSASASHLASPSSSRLADSGSVRQESTSRTEPNCPQNKDRYPKPTEPRLGARETPMDTYLEREWGSKPSDCAPYKEDELYGIPASCTPLSLSCLQLNTPENRENPVIKAGSSKKHANHLRKLVFDDFCDSPNACNNNSSEDDRRENEKKSDCFASSKTGFWDCCSTSYAQSLEFDGSEGNAIANSVGEIPSKLSEKSGSCLSKRLSCIRSLEMNRTRTSSEASMDAAYLDKISELDSMMSESDNSKSPCNNGFKSVEVEGPSKSPQGREFLEEPDKLQEGSKLNLSKPALTADGLESGGEWKPSSFFLLSPADHEMSEDFSLHSTSHSGTSEVKPPNCLFQTEFSQGALLSSSQGLFEDQRFGSSLFKISSEMQSLHSPLQSPWSAAFVPEKRSKNGNQSTKRKIQSSLANASPSKATKS.

Residues 18–56 (CHICLGKVRQPVVCTNNHVFCSICIDLWLKNNSQCPACR) form an RING-type; degenerate zinc finger. Coiled-coil stretches lie at residues 87 to 129 (LRKT…TILD) and 157 to 267 (VVEW…KEDV). Residue S210 is modified to Phosphoserine. Positions 273-359 (RAPSADSKGP…RLGARETPMD (87 aa)) are disordered. The span at 302–319 (AGSASASHLASPSSSRLA) shows a compositional bias: low complexity. The segment covering 323 to 338 (SVRQESTSRTEPNCPQ) has biased composition (polar residues). Residues 339–359 (NKDRYPKPTEPRLGARETPMD) show a composition bias toward basic and acidic residues. Residues S522, S549, S557, S564, and S566 each carry the phosphoserine modification. A compositionally biased stretch (polar residues) spans 541-555 (MSESDNSKSPCNNGF). Disordered stretches follow at residues 541-585 (MSES…GSKL) and 691-722 (VPEK…ATKS). Over residues 571–581 (EFLEEPDKLQE) the composition is skewed to basic and acidic residues. Polar residues predominate over residues 698–722 (NGNQSTKRKIQSSLANASPSKATKS). S715 and S717 each carry phosphoserine.

Associates with ORC complex. Binds to chromatin; association is cell cycle-regulated, absent from mitotic chromosomes, is associated with chromatin from G1 and partially released from chromatin from mid S-phase. In terms of processing, auto-ubiquitinated.

Its subcellular location is the chromosome. It catalyses the reaction S-ubiquitinyl-[E2 ubiquitin-conjugating enzyme]-L-cysteine + [acceptor protein]-L-lysine = [E2 ubiquitin-conjugating enzyme]-L-cysteine + N(6)-ubiquitinyl-[acceptor protein]-L-lysine.. Functionally, E3 ubiquitin ligase essential for DNA replication origin activation during S phase. Acts as a replication origin selector which selects the origins to be fired and catalyzes the multi-mono-ubiquitination of a subset of chromatin-bound ORC3 and ORC5 during S-phase. The sequence is that of ORC ubiquitin ligase 1 from Mus musculus (Mouse).